The following is a 781-amino-acid chain: MAESMQRIASAFESARDLTLEAAAVASSRLGESSYFHYSKSIDSESLPGLLNSRYTREVRDGMKRVMSLMGSGDSSIELETHFADIVKNIGSDDVKVRRMVSVYLLRYAETNPNLALLSINSIQRSLSDSNPDVRALALKTLSDINIASLYPIILHSLKKTVIDSSEVVRCQVAMTLLKLFKEQGISIKDDVMPMLKSLLADSEPSVVSAALLLFQKAFAQELQLLHGHYRRYCSILNQLTENAQAIMIDIFIAYAKEYLPRPMVRDTSSDAEAIQLPDSFNQIPFPVYDVEYDHDLNLFLSSLKKLLHSPNAMVIVAVSKAFYQLSSPKTFKDSGIVDSLLRLTVSSYICSEIKELVLQSILVYCCSDPSLFRSHYKRFFLMPSDTENISIFKLKILSILVSDSNCKHIVNELKFVAGTEQSASILVEVSNTLSVCAQISSKWSSQIISWLLDRISSNTPIDKEVTASQINVLRSLIQKDPIKHIATVVKLSKMLSNHDLLPSAKAPIIWLLGEYVQVEPRICPDVLRRLLPQFSKEHAHVRLQILNLAAKLLSHDVDSYSGDMEYDIGTSRIGQMFEAALQLAKFDDEYDVRDRARMLASIFEQKRYEIATLLLQAPKPYPMASLNYCRDSFNLSALNLYPDMENYYELLPWNADPQASDRTPCEVKDYSKLKNSFSSSSYFGRNEVEFTNKPKRSASVSSVPSNTFTSSHGKKYQLQSLDEFFSDVSARQSVPKAKRVIIEESTSEETDHTDDESGSSSGDESTESSYVSSSEEETTE.

HEAT repeat units lie at residues 113-151, 153-186, 187-224, 294-332, and 521-559; these read PNLA…ASLY, IILH…EQGI, SIKD…QELQ, DHDL…PKTF, and PRIC…HDVD. 2 disordered regions span residues 694–713 and 731–781; these read KPKR…TSSH and ARQS…ETTE. The segment covering 699–712 has biased composition (polar residues); that stretch reads ASVSSVPSNTFTSS. The segment covering 746–758 has biased composition (acidic residues); the sequence is STSEETDHTDDES. Positions 759–774 are enriched in low complexity; sequence GSSSGDESTESSYVSS.

It belongs to the adaptor complexes large subunit family. Adaptor protein complex 3 (AP-3) is a heterotetramer composed of 2 large adaptins (APL5 and APL6), a medium adaptin (APM3) and a small adaptin (APS3).

It localises to the golgi apparatus. It is found in the cytoplasmic vesicle. The protein resides in the clathrin-coated vesicle membrane. Part of the AP-3 complex, an adaptor-related complex which is not clathrin-associated. The complex is associated with the Golgi region as well as more peripheral structures. It facilitates the budding of vesicles from the Golgi membrane and may be directly involved in trafficking to the vacuole. The sequence is that of AP-3 complex subunit beta (APL6) from Eremothecium gossypii (strain ATCC 10895 / CBS 109.51 / FGSC 9923 / NRRL Y-1056) (Yeast).